The sequence spans 161 residues: Nucleotide-binding protein Reut_A2760 (161 aa).

This sequence belongs to the YajQ family.

Its function is as follows. Nucleotide-binding protein. This Cupriavidus pinatubonensis (strain JMP 134 / LMG 1197) (Cupriavidus necator (strain JMP 134)) protein is Nucleotide-binding protein Reut_A2760.